Here is a 252-residue protein sequence, read N- to C-terminus: 5'-nucleotidase SurE (252 aa).

Asp-8, Asp-9, Ser-39, and Asn-95 together coordinate a divalent metal cation.

The protein belongs to the SurE nucleotidase family. The cofactor is a divalent metal cation.

The protein localises to the cytoplasm. It carries out the reaction a ribonucleoside 5'-phosphate + H2O = a ribonucleoside + phosphate. Its function is as follows. Nucleotidase that shows phosphatase activity on nucleoside 5'-monophosphates. The protein is 5'-nucleotidase SurE of Clostridium botulinum (strain Loch Maree / Type A3).